The following is a 296-amino-acid chain: NAD kinase (296 aa).

Asp73 functions as the Proton acceptor in the catalytic mechanism. Residues 73 to 74 (DG), Lys78, 151 to 152 (NE), Arg178, Asp180, and 191 to 196 (TAHAMS) each bind NAD(+).

The protein belongs to the NAD kinase family. Requires a divalent metal cation as cofactor.

Its subcellular location is the cytoplasm. The enzyme catalyses NAD(+) + ATP = ADP + NADP(+) + H(+). Involved in the regulation of the intracellular balance of NAD and NADP, and is a key enzyme in the biosynthesis of NADP. Catalyzes specifically the phosphorylation on 2'-hydroxyl of the adenosine moiety of NAD to yield NADP. This Francisella tularensis subsp. tularensis (strain FSC 198) protein is NAD kinase.